The primary structure comprises 759 residues: Phosphoribosylformylglycinamidine synthase subunit PurL (759 aa).

Residue His-61 is part of the active site. 2 residues coordinate ATP: Tyr-64 and Lys-105. Residue Glu-107 participates in Mg(2+) binding. Residues 108 to 111 (SHNH) and Arg-130 each bind substrate. The active-site Proton acceptor is the His-109. Asp-131 lines the Mg(2+) pocket. Gln-260 is a binding site for substrate. Position 288 (Asp-288) interacts with Mg(2+). Residue 332–334 (ESQ) participates in substrate binding. Residues Asp-520 and Gly-557 each contribute to the ATP site. Asn-558 lines the Mg(2+) pocket. Ser-560 contacts substrate.

It belongs to the FGAMS family. As to quaternary structure, monomer. Part of the FGAM synthase complex composed of 1 PurL, 1 PurQ and 2 PurS subunits.

The protein resides in the cytoplasm. It carries out the reaction N(2)-formyl-N(1)-(5-phospho-beta-D-ribosyl)glycinamide + L-glutamine + ATP + H2O = 2-formamido-N(1)-(5-O-phospho-beta-D-ribosyl)acetamidine + L-glutamate + ADP + phosphate + H(+). It functions in the pathway purine metabolism; IMP biosynthesis via de novo pathway; 5-amino-1-(5-phospho-D-ribosyl)imidazole from N(2)-formyl-N(1)-(5-phospho-D-ribosyl)glycinamide: step 1/2. Its function is as follows. Part of the phosphoribosylformylglycinamidine synthase complex involved in the purines biosynthetic pathway. Catalyzes the ATP-dependent conversion of formylglycinamide ribonucleotide (FGAR) and glutamine to yield formylglycinamidine ribonucleotide (FGAM) and glutamate. The FGAM synthase complex is composed of three subunits. PurQ produces an ammonia molecule by converting glutamine to glutamate. PurL transfers the ammonia molecule to FGAR to form FGAM in an ATP-dependent manner. PurS interacts with PurQ and PurL and is thought to assist in the transfer of the ammonia molecule from PurQ to PurL. The sequence is that of Phosphoribosylformylglycinamidine synthase subunit PurL from Thermoplasma volcanium (strain ATCC 51530 / DSM 4299 / JCM 9571 / NBRC 15438 / GSS1).